Here is a 610-residue protein sequence, read N- to C-terminus: Transcription termination factor Rho (610 aa).

A disordered region spans residues 117–227; the sequence is EVSRRERRGA…GDGAEAELRQ (111 aa). Positions 118 to 131 are enriched in basic and acidic residues; it reads VSRRERRGASREAD. Residues 178-187 are compositionally biased toward polar residues; it reads GVEQQSSSLQ. Basic and acidic residues predominate over residues 189–198; that stretch reads RGDDDGEGRQ. Positions 199–214 are enriched in basic residues; that stretch reads GRRGRRFRDRDRRRRG. The segment covering 215-227 has biased composition (basic and acidic residues); sequence ERSGDGAEAELRQ. The Rho RNA-BD domain occupies 231–309; it reads VQPVAGILDV…VRLDSINGGS (79 aa). ATP-binding positions include 352–357, 364–369, and Arg-395; these read GKGQRA and KAGKTT.

It belongs to the Rho family. As to quaternary structure, homohexamer. The homohexamer assembles into an open ring structure.

Functionally, facilitates transcription termination by a mechanism that involves Rho binding to the nascent RNA, activation of Rho's RNA-dependent ATPase activity, and release of the mRNA from the DNA template. This Mycobacterium leprae (strain TN) protein is Transcription termination factor Rho.